Reading from the N-terminus, the 355-residue chain is UDP-3-O-acylglucosamine N-acyltransferase (355 aa).

Catalysis depends on His-246, which acts as the Proton acceptor.

This sequence belongs to the transferase hexapeptide repeat family. LpxD subfamily. As to quaternary structure, homotrimer.

It catalyses the reaction a UDP-3-O-[(3R)-3-hydroxyacyl]-alpha-D-glucosamine + a (3R)-hydroxyacyl-[ACP] = a UDP-2-N,3-O-bis[(3R)-3-hydroxyacyl]-alpha-D-glucosamine + holo-[ACP] + H(+). It participates in bacterial outer membrane biogenesis; LPS lipid A biosynthesis. Functionally, catalyzes the N-acylation of UDP-3-O-acylglucosamine using 3-hydroxyacyl-ACP as the acyl donor. Is involved in the biosynthesis of lipid A, a phosphorylated glycolipid that anchors the lipopolysaccharide to the outer membrane of the cell. The sequence is that of UDP-3-O-acylglucosamine N-acyltransferase from Polaromonas naphthalenivorans (strain CJ2).